The following is a 215-amino-acid chain: Glycerol-3-phosphate acyltransferase (215 aa).

Helical transmembrane passes span 3 to 23 (LILL…LWIG), 42 to 61 (TNTF…LIDI), 68 to 90 (TLLP…FAVL), 110 to 130 (AGVL…VFVL), 134 to 154 (LFSM…ISVL), and 162 to 182 (LLPG…AIII).

It belongs to the PlsY family. In terms of assembly, probably interacts with PlsX.

The protein localises to the cell membrane. The catalysed reaction is an acyl phosphate + sn-glycerol 3-phosphate = a 1-acyl-sn-glycero-3-phosphate + phosphate. The protein operates within lipid metabolism; phospholipid metabolism. In terms of biological role, catalyzes the transfer of an acyl group from acyl-phosphate (acyl-PO(4)) to glycerol-3-phosphate (G3P) to form lysophosphatidic acid (LPA). This enzyme utilizes acyl-phosphate as fatty acyl donor, but not acyl-CoA or acyl-ACP. This Streptococcus equi subsp. zooepidemicus (strain MGCS10565) protein is Glycerol-3-phosphate acyltransferase.